A 533-amino-acid polypeptide reads, in one-letter code: Death domain-containing ATP nucleosidase (533 aa).

Residues 1–262 (MDAAAIISLL…TAAGKEEKVS (262 aa)) are death domain. The tract at residues 184-248 (STFVSDDATQ…TQTSTNSFNS (65 aa)) is disordered. Positions 218–227 (PSAQVNQPPT) are enriched in polar residues. Low complexity predominate over residues 236-248 (SGSTQTSTNSFNS). The tract at residues 263–533 (DDVTKGIKFL…HLDDDRTIHM (271 aa)) is purine nucleoside phosphorylase domain.

It carries out the reaction ATP + H2O = D-ribose 5-triphosphate + adenine. The catalysed reaction is dATP + H2O = 2-deoxyribose 5-triphosphate + adenine. In terms of biological role, the C-terminal purine nucleoside phosphorylase (PNP) domain cleaves the N-glycosidic bond of ATP, and to a lesser extent dATP, to release adenine and a sugar triphosphate; has weak activity on ADP and AMP and no activity on dADP, dAMP, adenosine, deoxyadenosine or other (d)NTPs. In Amphimedon queenslandica (Sponge), this protein is Death domain-containing ATP nucleosidase (109585858).